The primary structure comprises 206 residues: Cytochrome c (206 aa).

3 helical membrane-spanning segments follow: residues 10-30 (IALA…VSFL), 49-69 (FMGW…LGKM), and 76-96 (KWFL…FLSL). Residues Cys152, Cys155, His156, and Met182 each contribute to the heme site.

As to quaternary structure, monomer. Component of the photosynthetic reaction center composed of protein subunits PscA, PscC, PscB and PscD. The reaction center interacts with FmoA (which forms the Fenna-Matthews-Olson (FMO) complex). The reaction center/FmoA complex has two PscA subunits, one PscB and one PscD subunit, probably two FmoA complexes and at least one PscC subunit. Post-translationally, binds 1 heme group per subunit.

The protein resides in the cell inner membrane. Functionally, monoheme cytochrome which is the immediate electron donor to P840 of the photosynthetic reaction center complex. The chain is Cytochrome c (pscC) from Chlorobaculum tepidum (strain ATCC 49652 / DSM 12025 / NBRC 103806 / TLS) (Chlorobium tepidum).